The sequence spans 284 residues: Bifunctional protein FolD (284 aa).

NADP(+) contacts are provided by residues 165-167 (GRS) and serine 190.

Belongs to the tetrahydrofolate dehydrogenase/cyclohydrolase family. Homodimer.

It catalyses the reaction (6R)-5,10-methylene-5,6,7,8-tetrahydrofolate + NADP(+) = (6R)-5,10-methenyltetrahydrofolate + NADPH. The catalysed reaction is (6R)-5,10-methenyltetrahydrofolate + H2O = (6R)-10-formyltetrahydrofolate + H(+). Its pathway is one-carbon metabolism; tetrahydrofolate interconversion. In terms of biological role, catalyzes the oxidation of 5,10-methylenetetrahydrofolate to 5,10-methenyltetrahydrofolate and then the hydrolysis of 5,10-methenyltetrahydrofolate to 10-formyltetrahydrofolate. This Streptococcus pyogenes serotype M28 (strain MGAS6180) protein is Bifunctional protein FolD.